We begin with the raw amino-acid sequence, 328 residues long: NADH-quinone oxidoreductase subunit H (328 aa).

8 helical membrane passes run 10 to 30 (IIKI…GTYF), 80 to 100 (IAPV…PFLP), 118 to 138 (IGIL…LLGG), 155 to 175 (AVFI…IMMV), 191 to 211 (ITSW…IAAF), 243 to 263 (LFFI…SLLF), 272 to 292 (LLGA…FLWT), and 306 to 326 (WLCW…TAIV).

The protein belongs to the complex I subunit 1 family. As to quaternary structure, NDH-1 is composed of 14 different subunits. Subunits NuoA, H, J, K, L, M, N constitute the membrane sector of the complex.

It is found in the cell inner membrane. It carries out the reaction a quinone + NADH + 5 H(+)(in) = a quinol + NAD(+) + 4 H(+)(out). Its function is as follows. NDH-1 shuttles electrons from NADH, via FMN and iron-sulfur (Fe-S) centers, to quinones in the respiratory chain. The immediate electron acceptor for the enzyme in this species is believed to be ubiquinone. Couples the redox reaction to proton translocation (for every two electrons transferred, four hydrogen ions are translocated across the cytoplasmic membrane), and thus conserves the redox energy in a proton gradient. This subunit may bind ubiquinone. The polypeptide is NADH-quinone oxidoreductase subunit H (Sulfurimonas denitrificans (strain ATCC 33889 / DSM 1251) (Thiomicrospira denitrificans (strain ATCC 33889 / DSM 1251))).